Here is a 151-residue protein sequence, read N- to C-terminus: Spore coat polysaccharide biosynthesis protein SpsL (151 aa).

The protein to dTDP-4-dehydrorhamnose reductase.

It functions in the pathway spore coat biogenesis; spore coat polysaccharide biosynthesis. This Bacillus subtilis (strain 168) protein is Spore coat polysaccharide biosynthesis protein SpsL (spsL).